Reading from the N-terminus, the 557-residue chain is Dihydroxy-acid dehydratase (557 aa).

A Mg(2+)-binding site is contributed by Asp78. A [2Fe-2S] cluster-binding site is contributed by Cys119. Residues Asp120 and Lys121 each contribute to the Mg(2+) site. The residue at position 121 (Lys121) is an N6-carboxylysine. [2Fe-2S] cluster is bound at residue Cys194. Glu446 provides a ligand contact to Mg(2+). Catalysis depends on Ser472, which acts as the Proton acceptor.

It belongs to the IlvD/Edd family. As to quaternary structure, homodimer. The cofactor is [2Fe-2S] cluster. It depends on Mg(2+) as a cofactor.

The catalysed reaction is (2R)-2,3-dihydroxy-3-methylbutanoate = 3-methyl-2-oxobutanoate + H2O. It carries out the reaction (2R,3R)-2,3-dihydroxy-3-methylpentanoate = (S)-3-methyl-2-oxopentanoate + H2O. It functions in the pathway amino-acid biosynthesis; L-isoleucine biosynthesis; L-isoleucine from 2-oxobutanoate: step 3/4. It participates in amino-acid biosynthesis; L-valine biosynthesis; L-valine from pyruvate: step 3/4. Its function is as follows. Functions in the biosynthesis of branched-chain amino acids. Catalyzes the dehydration of (2R,3R)-2,3-dihydroxy-3-methylpentanoate (2,3-dihydroxy-3-methylvalerate) into 2-oxo-3-methylpentanoate (2-oxo-3-methylvalerate) and of (2R)-2,3-dihydroxy-3-methylbutanoate (2,3-dihydroxyisovalerate) into 2-oxo-3-methylbutanoate (2-oxoisovalerate), the penultimate precursor to L-isoleucine and L-valine, respectively. This Desulfosudis oleivorans (strain DSM 6200 / JCM 39069 / Hxd3) (Desulfococcus oleovorans) protein is Dihydroxy-acid dehydratase.